The primary structure comprises 88 residues: uncharacterized protein (88 aa).

3 consecutive transmembrane segments (helical) span residues Val-3 to Ala-23, Val-33 to Ala-53, and Phe-61 to Phe-81.

It localises to the cell membrane. This is an uncharacterized protein from Bacillus subtilis (strain 168).